Consider the following 794-residue polypeptide: ALG-2 interacting protein X (794 aa).

The BRO1 domain occupies methionine 1–alanine 385. Coiled-coil stretches lie at residues serine 499–lysine 568 and leucine 600–glutamate 655. The tract at residues glycine 695 to tyrosine 794 is disordered. Positions proline 698 to proline 712 are enriched in low complexity. A compositionally biased stretch (polar residues) spans valine 713–serine 722. 2 stretches are compositionally biased toward low complexity: residues proline 723–serine 742 and tyrosine 749–glycine 764. Positions proline 765–tyrosine 787 are enriched in pro residues.

Self-associates; the interaction is calcium-independent Interacts with pefa; the interaction is calcium-dependent. Interacts with pefb; the interaction is calcium-dependent.

The protein resides in the cytoplasm. The protein localises to the cytoplasmic vesicle membrane. It localises to the endosome. Functionally, unknown. Required for development but not for cell death. In Dictyostelium discoideum (Social amoeba), this protein is ALG-2 interacting protein X (alxA).